A 140-amino-acid polypeptide reads, in one-letter code: Putative nickel-responsive regulator (140 aa).

The Ni(2+) site is built by histidine 81, histidine 92, histidine 94, and cysteine 100.

The protein belongs to the transcriptional regulatory CopG/NikR family. Ni(2+) is required as a cofactor.

Its function is as follows. Transcriptional regulator. This Methanocella arvoryzae (strain DSM 22066 / NBRC 105507 / MRE50) protein is Putative nickel-responsive regulator.